The primary structure comprises 388 residues: Valine--pyruvate aminotransferase (388 aa).

At lysine 234 the chain carries N6-(pyridoxal phosphate)lysine.

The protein belongs to the class-I pyridoxal-phosphate-dependent aminotransferase family. Pyridoxal 5'-phosphate serves as cofactor.

It carries out the reaction L-valine + pyruvate = 3-methyl-2-oxobutanoate + L-alanine. The protein is Valine--pyruvate aminotransferase of Mycobacterium tuberculosis (strain ATCC 25618 / H37Rv).